Consider the following 426-residue polypeptide: 3-phosphoshikimate 1-carboxyvinyltransferase (426 aa).

K22, S23, and R27 together coordinate 3-phosphoshikimate. Residue K22 participates in phosphoenolpyruvate binding. Residues G96 and R124 each coordinate phosphoenolpyruvate. Positions 170, 171, 172, 198, 314, 337, and 341 each coordinate 3-phosphoshikimate. Q172 is a binding site for phosphoenolpyruvate. Residue D314 is the Proton acceptor of the active site. Phosphoenolpyruvate-binding residues include R345, R387, and K412.

It belongs to the EPSP synthase family. Monomer.

It is found in the cytoplasm. It carries out the reaction 3-phosphoshikimate + phosphoenolpyruvate = 5-O-(1-carboxyvinyl)-3-phosphoshikimate + phosphate. Its pathway is metabolic intermediate biosynthesis; chorismate biosynthesis; chorismate from D-erythrose 4-phosphate and phosphoenolpyruvate: step 6/7. Catalyzes the transfer of the enolpyruvyl moiety of phosphoenolpyruvate (PEP) to the 5-hydroxyl of shikimate-3-phosphate (S3P) to produce enolpyruvyl shikimate-3-phosphate and inorganic phosphate. The chain is 3-phosphoshikimate 1-carboxyvinyltransferase from Shewanella loihica (strain ATCC BAA-1088 / PV-4).